The primary structure comprises 207 residues: Outer-membrane lipoprotein LolB (207 aa).

Residues 1–21 (MTLPDFRLIRLLPLASLVLTA) form the signal peptide. Cysteine 22 carries N-palmitoyl cysteine lipidation. Residue cysteine 22 is the site of S-diacylglycerol cysteine attachment.

This sequence belongs to the LolB family. As to quaternary structure, monomer.

The protein resides in the cell outer membrane. Plays a critical role in the incorporation of lipoproteins in the outer membrane after they are released by the LolA protein. In Salmonella agona (strain SL483), this protein is Outer-membrane lipoprotein LolB.